The chain runs to 674 residues: tRNA 5-methylaminomethyl-2-thiouridine biosynthesis bifunctional protein MnmC (674 aa).

Positions 1-246 are tRNA (mnm(5)s(2)U34)-methyltransferase; that stretch reads MFIMSSISHA…KREMIAGSLS (246 aa). Residues 272–674 form an FAD-dependent cmnm(5)s(2)U34 oxidoreductase region; the sequence is IGGGIASATL…RKGKALTQKV (403 aa).

The protein in the N-terminal section; belongs to the methyltransferase superfamily. tRNA (mnm(5)s(2)U34)-methyltransferase family. It in the C-terminal section; belongs to the DAO family. It depends on FAD as a cofactor.

It is found in the cytoplasm. It carries out the reaction 5-aminomethyl-2-thiouridine(34) in tRNA + S-adenosyl-L-methionine = 5-methylaminomethyl-2-thiouridine(34) in tRNA + S-adenosyl-L-homocysteine + H(+). Its function is as follows. Catalyzes the last two steps in the biosynthesis of 5-methylaminomethyl-2-thiouridine (mnm(5)s(2)U) at the wobble position (U34) in tRNA. Catalyzes the FAD-dependent demodification of cmnm(5)s(2)U34 to nm(5)s(2)U34, followed by the transfer of a methyl group from S-adenosyl-L-methionine to nm(5)s(2)U34, to form mnm(5)s(2)U34. The chain is tRNA 5-methylaminomethyl-2-thiouridine biosynthesis bifunctional protein MnmC from Vibrio cholerae serotype O1 (strain ATCC 39315 / El Tor Inaba N16961).